Consider the following 400-residue polypeptide: Exodeoxyribonuclease 7 large subunit (400 aa).

Belongs to the XseA family. In terms of assembly, heterooligomer composed of large and small subunits.

It is found in the cytoplasm. The catalysed reaction is Exonucleolytic cleavage in either 5'- to 3'- or 3'- to 5'-direction to yield nucleoside 5'-phosphates.. Its function is as follows. Bidirectionally degrades single-stranded DNA into large acid-insoluble oligonucleotides, which are then degraded further into small acid-soluble oligonucleotides. The sequence is that of Exodeoxyribonuclease 7 large subunit from Clostridium perfringens (strain ATCC 13124 / DSM 756 / JCM 1290 / NCIMB 6125 / NCTC 8237 / Type A).